Consider the following 147-residue polypeptide: Lysozyme C (147 aa).

The signal sequence occupies residues 1–18 (MRSLLILVLCFLPLAALG). Positions 19–147 (KVFGRCELAA…VQAWIRGCRL (129 aa)) constitute a C-type lysozyme domain. Disulfide bonds link cysteine 24/cysteine 145, cysteine 48/cysteine 133, cysteine 82/cysteine 98, and cysteine 94/cysteine 112. Catalysis depends on residues glutamate 53 and aspartate 70. Aspartate 119 is a binding site for substrate.

The protein belongs to the glycosyl hydrolase 22 family. As to quaternary structure, monomer. As to expression, in the egg white and polymorphonuclear leukocytes.

Its subcellular location is the secreted. It catalyses the reaction Hydrolysis of (1-&gt;4)-beta-linkages between N-acetylmuramic acid and N-acetyl-D-glucosamine residues in a peptidoglycan and between N-acetyl-D-glucosamine residues in chitodextrins.. Its function is as follows. Lysozymes have primarily a bacteriolytic function; those in tissues and body fluids are associated with the monocyte-macrophage system and enhance the activity of immunoagents. Has bacteriolytic activity against M.luteus. The polypeptide is Lysozyme C (LYZ) (Gallus gallus (Chicken)).